Reading from the N-terminus, the 155-residue chain is Ribonuclease H (155 aa).

The RNase H type-1 domain occupies D4–Q145. Residues D13, E51, D73, and D137 each contribute to the Mg(2+) site.

Belongs to the RNase H family. As to quaternary structure, monomer. Mg(2+) is required as a cofactor.

It localises to the cytoplasm. The catalysed reaction is Endonucleolytic cleavage to 5'-phosphomonoester.. Functionally, endonuclease that specifically degrades the RNA of RNA-DNA hybrids. The polypeptide is Ribonuclease H (Rickettsia bellii (strain RML369-C)).